The chain runs to 223 residues: Ethylene-inducing xylanase (223 aa).

Positions 1-19 are cleaved as a signal peptide; it reads MVSFTTLLAGFVAVTGVLS. In terms of domain architecture, GH11 spans 34 to 223; the sequence is QTIGPGTGFN…SSGNANINVS (190 aa). The N-linked (GlcNAc...) asparagine glycan is linked to asparagine 94. The active-site Nucleophile is glutamate 119. Glutamate 210 (proton donor) is an active-site residue.

The protein belongs to the glycosyl hydrolase 11 (cellulase G) family. Interactc with tomato LeEix2 receptor to trigger its internalization.

The protein resides in the secreted. It catalyses the reaction Endohydrolysis of (1-&gt;4)-beta-D-xylosidic linkages in xylans.. The protein operates within glycan degradation; xylan degradation. Endo-1,4-beta-xylanase involved in the hydrolysis of xylan, a major structural heterogeneous polysaccharide found in plant biomass representing the second most abundant polysaccharide in the biosphere, after cellulose. Acts as an elicitor of plant defense responses in hosts such as tobacco (Nicotiana tabacum) or tomato (Solanum lycopersicum). Induces the production of ethylene and leads alterations in membrane function with rapid efflux of potassium, uptake of calcium, alkalization of the medium, increased leakage of cellular components and necrosis in plant hosts. EIX is translocated through the xylem of the host plant to the leaf mesophyll, leading to host response to pathogen-derived extracellular proteins in tissues distant from the invading pathogen. Greatly enhances the expression of two calcineurin B-like proteins-interacting protein kinases (CIPKs) family members, OsCIPK14 and OsCIPK15, in rice cultured cells. In tomato, triggers the defense response via binding to and subsequent internalization of the LeEix2 receptor. This chain is Ethylene-inducing xylanase, found in Hypocrea rufa (Trichoderma viride).